Consider the following 187-residue polypeptide: Large ribosomal subunit protein uL5 (187 aa).

The protein belongs to the universal ribosomal protein uL5 family. As to quaternary structure, part of the 50S ribosomal subunit; part of the 5S rRNA/L5/L18/L25 subcomplex. Contacts the 5S rRNA and the P site tRNA. Forms a bridge to the 30S subunit in the 70S ribosome.

Its function is as follows. This is one of the proteins that bind and probably mediate the attachment of the 5S RNA into the large ribosomal subunit, where it forms part of the central protuberance. In the 70S ribosome it contacts protein S13 of the 30S subunit (bridge B1b), connecting the 2 subunits; this bridge is implicated in subunit movement. Contacts the P site tRNA; the 5S rRNA and some of its associated proteins might help stabilize positioning of ribosome-bound tRNAs. The chain is Large ribosomal subunit protein uL5 from Mycolicibacterium paratuberculosis (strain ATCC BAA-968 / K-10) (Mycobacterium paratuberculosis).